We begin with the raw amino-acid sequence, 382 residues long: 1-deoxy-D-xylulose 5-phosphate reductoisomerase (382 aa).

Thr11, Gly12, Ser13, Ile14, and Asn123 together coordinate NADPH. Lys124 contacts 1-deoxy-D-xylulose 5-phosphate. NADPH is bound at residue Glu125. Asp149 lines the Mn(2+) pocket. Residues Ser150, Glu151, Ser173, and His196 each coordinate 1-deoxy-D-xylulose 5-phosphate. Residue Glu151 coordinates Mn(2+). Gly202 provides a ligand contact to NADPH. Positions 209, 214, 215, and 218 each coordinate 1-deoxy-D-xylulose 5-phosphate. Glu218 lines the Mn(2+) pocket.

This sequence belongs to the DXR family. The cofactor is Mg(2+). Mn(2+) is required as a cofactor.

It catalyses the reaction 2-C-methyl-D-erythritol 4-phosphate + NADP(+) = 1-deoxy-D-xylulose 5-phosphate + NADPH + H(+). Its pathway is isoprenoid biosynthesis; isopentenyl diphosphate biosynthesis via DXP pathway; isopentenyl diphosphate from 1-deoxy-D-xylulose 5-phosphate: step 1/6. Its function is as follows. Catalyzes the NADPH-dependent rearrangement and reduction of 1-deoxy-D-xylulose-5-phosphate (DXP) to 2-C-methyl-D-erythritol 4-phosphate (MEP). In Phocaeicola vulgatus (strain ATCC 8482 / DSM 1447 / JCM 5826 / CCUG 4940 / NBRC 14291 / NCTC 11154) (Bacteroides vulgatus), this protein is 1-deoxy-D-xylulose 5-phosphate reductoisomerase.